We begin with the raw amino-acid sequence, 262 residues long: Ribosomal RNA small subunit methyltransferase A (262 aa).

The S-adenosyl-L-methionine site is built by Asn14, Leu16, Gly41, Glu63, Asp85, and Asn105.

This sequence belongs to the class I-like SAM-binding methyltransferase superfamily. rRNA adenine N(6)-methyltransferase family. RsmA subfamily.

Its subcellular location is the cytoplasm. It carries out the reaction adenosine(1518)/adenosine(1519) in 16S rRNA + 4 S-adenosyl-L-methionine = N(6)-dimethyladenosine(1518)/N(6)-dimethyladenosine(1519) in 16S rRNA + 4 S-adenosyl-L-homocysteine + 4 H(+). Specifically dimethylates two adjacent adenosines (A1518 and A1519) in the loop of a conserved hairpin near the 3'-end of 16S rRNA in the 30S particle. May play a critical role in biogenesis of 30S subunits. In Maridesulfovibrio salexigens (strain ATCC 14822 / DSM 2638 / NCIMB 8403 / VKM B-1763) (Desulfovibrio salexigens), this protein is Ribosomal RNA small subunit methyltransferase A.